A 122-amino-acid chain; its full sequence is Small ribosomal subunit protein uS13 (122 aa).

Residues 95–122 are disordered; sequence GLPVRGQKTKTNARTRKGPKRTVANKKK.

It belongs to the universal ribosomal protein uS13 family. Part of the 30S ribosomal subunit. Forms a loose heterodimer with protein S19. Forms two bridges to the 50S subunit in the 70S ribosome.

Functionally, located at the top of the head of the 30S subunit, it contacts several helices of the 16S rRNA. In the 70S ribosome it contacts the 23S rRNA (bridge B1a) and protein L5 of the 50S subunit (bridge B1b), connecting the 2 subunits; these bridges are implicated in subunit movement. Contacts the tRNAs in the A and P-sites. This chain is Small ribosomal subunit protein uS13, found in Agathobacter rectalis (strain ATCC 33656 / DSM 3377 / JCM 17463 / KCTC 5835 / VPI 0990) (Eubacterium rectale).